Reading from the N-terminus, the 90-residue chain is DNA-directed RNA polymerase subunit omega (90 aa).

The protein belongs to the RNA polymerase subunit omega family. As to quaternary structure, the RNAP catalytic core consists of 2 alpha, 1 beta, 1 beta' and 1 omega subunit. When a sigma factor is associated with the core the holoenzyme is formed, which can initiate transcription.

It carries out the reaction RNA(n) + a ribonucleoside 5'-triphosphate = RNA(n+1) + diphosphate. Its function is as follows. Promotes RNA polymerase assembly. Latches the N- and C-terminal regions of the beta' subunit thereby facilitating its interaction with the beta and alpha subunits. This is DNA-directed RNA polymerase subunit omega from Histophilus somni (strain 129Pt) (Haemophilus somnus).